The primary structure comprises 347 residues: Phosphoribosylformylglycinamidine cyclo-ligase (347 aa).

The protein belongs to the AIR synthase family.

The protein localises to the cytoplasm. It catalyses the reaction 2-formamido-N(1)-(5-O-phospho-beta-D-ribosyl)acetamidine + ATP = 5-amino-1-(5-phospho-beta-D-ribosyl)imidazole + ADP + phosphate + H(+). Its pathway is purine metabolism; IMP biosynthesis via de novo pathway; 5-amino-1-(5-phospho-D-ribosyl)imidazole from N(2)-formyl-N(1)-(5-phospho-D-ribosyl)glycinamide: step 2/2. This is Phosphoribosylformylglycinamidine cyclo-ligase from Prochlorococcus marinus (strain MIT 9215).